The chain runs to 372 residues: MKLMLGLLLLPLTLVHASPATPEPCELDQDEESVRCYCNFSDPQPNWSSAFLCAGAEDVEFYGGGRSLEYLLKRVDTEANLGQYTDIIRSLPLKRLTVRSARVPTQILFGTLRVLGYSGLRELTLENLEVTGTALSPLLDATGPDLNTLSLRNVSWATTDTWLAELQQWLKPGLKVLSIAQAHSLNFSCKQVGVFPALATLDLSDNPELGEKGLISALCPHKFPTLQVLALRNAGMETTSGVCSALAAARVPLQALDLSHNSLRDTAGTPSCDWPSQLNSLNLSFTGLEHVPKGLPAKLSVLDLSYNRLDRKPRPEELPEVGSLSLTGNPFLHSESQSEAYNSGVVIATALSPGSAGLSGTLALLLGHRLFV.

The first 17 residues, 1–17 (MKLMLGLLLLPLTLVHA), serve as a signal peptide directing secretion. Disulfide bonds link cysteine 25-cysteine 38 and cysteine 36-cysteine 53. N-linked (GlcNAc...) asparagine glycans are attached at residues asparagine 39 and asparagine 46. LRR repeat units lie at residues 57–84 (EDVEFYGGGRSLEYLLKRVDTEANLGQY), 85–120 (TDIIRSLPLKRLTVRSARVPTQILFGTLRVLGYSGL), 121–146 (RELTLENLEVTGTALSPLLDATGPDL), 147–174 (NTLSLRNVSWATTDTWLAELQQWLKPGL), 175–198 (KVLSIAQAHSLNFSCKQVGVFPAL), 199–226 (ATLDLSDNPELGEKGLISALCPHKFPTL), 227–253 (QVLALRNAGMETTSGVCSALAAARVPL), 254–278 (QALDLSHNSLRDTAGTPSCDWPSQL), 279–299 (NSLNLSFTGLEHVPKGLPAKL), 300–321 (SVLDLSYNRLDRKPRPEELPEV), and 322–346 (GSLSLTGNPFLHSESQSEAYNSGVV). Asparagine 153 and asparagine 186 each carry an N-linked (GlcNAc...) asparagine glycan. Cystine bridges form between cysteine 189–cysteine 219 and cysteine 243–cysteine 272. The N-linked (GlcNAc...) asparagine glycan is linked to asparagine 282. Residues 290 to 372 (HVPKGLPAKL…ALLLGHRLFV (83 aa)) are required for response to bacterial lipopolysaccharide (LPS). Asparagine 342 carries the GPI-anchor amidated asparagine lipid modification. A propeptide spans 343-372 (SGVVIATALSPGSAGLSGTLALLLGHRLFV) (removed in mature form).

Belongs to the lipopolysaccharide (LPS) receptor, a multi-protein complex containing at least CD14, LY96 and TLR4. Interacts with LPS-bound LPB. Interacts with LPAR1. Interacts with the TLR2:TLR6 or TLR2:TLR1 heterodimers; upon interaction with ligands such as diacylated lipopeptides and triacylated lipopeptides, respectively. Interacts with MYO18A. Interacts with FSTL1. As to expression, detected in macrophages and peripheral blood monocytes.

It localises to the cell membrane. It is found in the secreted. Its subcellular location is the membrane raft. The protein resides in the golgi apparatus. Functionally, coreceptor for bacterial lipopolysaccharide. In concert with LBP, binds to monomeric lipopolysaccharide and delivers it to the LY96/TLR4 complex, thereby mediating the innate immune response to bacterial lipopolysaccharide (LPS). Acts via MyD88, TIRAP and TRAF6, leading to NF-kappa-B activation, cytokine secretion and the inflammatory response. Acts as a coreceptor for TLR2:TLR6 heterodimer in response to diacylated lipopeptides and for TLR2:TLR1 heterodimer in response to triacylated lipopeptides, these clusters trigger signaling from the cell surface and subsequently are targeted to the Golgi in a lipid-raft dependent pathway. Binds electronegative LDL (LDL(-)) and mediates the cytokine release induced by LDL(-). The sequence is that of Monocyte differentiation antigen CD14 (Cd14) from Rattus norvegicus (Rat).